The following is a 486-amino-acid chain: Pup--protein ligase (486 aa).

Glutamate 33 is a binding site for Mg(2+). Arginine 76 is a binding site for ATP. Tyrosine 78 contributes to the Mg(2+) binding site. Residue aspartate 80 is the Proton acceptor of the active site. Residue glutamate 86 participates in Mg(2+) binding. ATP contacts are provided by threonine 89 and tryptophan 451.

Belongs to the Pup ligase/Pup deamidase family. Pup-conjugating enzyme subfamily.

The enzyme catalyses ATP + [prokaryotic ubiquitin-like protein]-L-glutamate + [protein]-L-lysine = ADP + phosphate + N(6)-([prokaryotic ubiquitin-like protein]-gamma-L-glutamyl)-[protein]-L-lysine.. Its pathway is protein degradation; proteasomal Pup-dependent pathway. It functions in the pathway protein modification; protein pupylation. Its function is as follows. Catalyzes the covalent attachment of the prokaryotic ubiquitin-like protein modifier Pup to the proteasomal substrate proteins, thereby targeting them for proteasomal degradation. This tagging system is termed pupylation. The ligation reaction involves the side-chain carboxylate of the C-terminal glutamate of Pup and the side-chain amino group of a substrate lysine. The polypeptide is Pup--protein ligase (Bifidobacterium longum (strain DJO10A)).